We begin with the raw amino-acid sequence, 487 residues long: MLKSVFVLFLVNYLNSVRCLEVPDAKLEAIYPKGLRVSIPDDGYTLFAFHGKLNEEMEGLEAGHWSRDITKAKNGRWIFRDRNAKLKIGDKIYFWTYILKDGLGYRQDNGEWTVTGYVNEDGEPLDANFEPRSTASTAAPPQAGAGQAPGPSYPCELSVSEVSVPGFVCKGQMLFEDNFNKPLADGRIWTPEIMFPGEPDYPFNVYMKETDNLHVGNGNLVIKPMPLVTAFGEDAIWKTLDLSDRCTGLLGTAQCKRDPSDAIIVPPIVTAKINTKKTFAFKYGRVEISAKMPRGDWLVPLIQLEPVNKNYGIRNYVSGLLRVACVKGNTEYIKTLVGGPIMSEAEPYRTANLKEFISNEPWTNEFHNYTLEWSPDAITMAVDGIVYGRVTAPAGGFYKEANEQNVEAAARWIQGSNIAPFDDMFYISLGMDVGGVHEFPDEAINKPWKNTATKAMVNFWNARSQWNPTWLESEKALLVDYVRVYAL.

The signal sequence occupies residues 1–19 (MLKSVFVLFLVNYLNSVRC). The CBM39 domain maps to 20 to 119 (LEVPDAKLEA…GEWTVTGYVN (100 aa)). A disordered region spans residues 123-151 (EPLDANFEPRSTASTAAPPQAGAGQAPGP). Positions 133-150 (STASTAAPPQAGAGQAPG) are enriched in low complexity. One can recognise a GH16 domain in the interval 157-487 (LSVSEVSVPG…LVDYVRVYAL (331 aa)). N-linked (GlcNAc...) asparagine glycosylation occurs at asparagine 368.

In terms of assembly, monomer. N-glycosylated. In terms of tissue distribution, fat body and hemolymph.

It localises to the secreted. In terms of biological role, involved in the recognition of invading microorganisms. Binds specifically to beta-1,3-glucan and activates the phenoloxidase cascade. Causes aggregation of invading microorganisms. In Manduca sexta (Tobacco hawkmoth), this protein is Beta-1,3-glucan-binding protein 1.